The following is a 184-amino-acid chain: Cell wall protein phiA (184 aa).

The signal sequence occupies residues 1-21; it reads MQLKNLIFAAATAAALPATDA. Residue asparagine 58 is glycosylated (N-linked (GlcNAc...) asparagine).

This sequence belongs to the phiA family.

It is found in the secreted. The protein localises to the cell wall. Cell wall protein involved in development of asexual structures such as phialide and conidium development, and thus required for spore formation. Plays a role as a general stress protectant produced by the fungus in competition with antagonistic bacteria. The sequence is that of Cell wall protein phiA from Aspergillus niger (strain ATCC MYA-4892 / CBS 513.88 / FGSC A1513).